Here is a 257-residue protein sequence, read N- to C-terminus: Baramicin A1 (257 aa).

The first 19 residues, 1 to 19 (MKSFGLIALAICGVICVAA), serve as a signal peptide directing secretion. A propeptide spanning residues 20–21 (EP) is cleaved from the precursor. At Gln-22 the chain carries Pyrrolidone carboxylic acid. Residues 95–122 (GPNFSAKNLGPNGAKSVGIPQRARRSPQ) are disordered. Asn-97 carries an N-linked (GlcNAc...) asparagine glycan. The propeptide occupies 118–121 (RRSP). The residue at position 122 (Gln-122) is a Pyrrolidone carboxylic acid. Positions 145–148 (RRSP) are excised as a propeptide. Gln-149 carries the pyrrolidone carboxylic acid modification. Residues 172–175 (RRSP) constitute a propeptide that is removed on maturation. Gln-176 carries the post-translational modification Pyrrolidone carboxylic acid. Residues 199–204 (RRGIND) constitute a propeptide that is removed on maturation. The N-linked (GlcNAc...) asparagine glycan is linked to Asn-225.

In terms of processing, proteolytically cleaved. Hemolymph (at protein level).

It is found in the secreted. Its function is as follows. Secreted immune-induced peptides induced by Toll signaling. Has a significant role in resistance to infection by the entomopathogenic fungus B.bassiana R444 and weak antifungal activity against M.rileyi PHP1705. In adult males, activity appears to be important for neuromuscular processes that mediate correct wing posture upon Toll activation. In Drosophila melanogaster (Fruit fly), this protein is Baramicin A1.